Reading from the N-terminus, the 356-residue chain is Protein RecA (356 aa).

79 to 86 (GPESSGKT) is a binding site for ATP.

This sequence belongs to the RecA family.

The protein localises to the cytoplasm. Its function is as follows. Can catalyze the hydrolysis of ATP in the presence of single-stranded DNA, the ATP-dependent uptake of single-stranded DNA by duplex DNA, and the ATP-dependent hybridization of homologous single-stranded DNAs. It interacts with LexA causing its activation and leading to its autocatalytic cleavage. This chain is Protein RecA, found in Borrelia hermsii (strain HS1 / DAH).